The primary structure comprises 273 residues: Proteasome subunit beta type-10 (273 aa).

The residue at position 1 (Met-1) is an N-acetylmethionine. Residues Met-1–Gly-39 constitute a propeptide, removed in mature form. Thr-40 acts as the Nucleophile in catalysis. Ser-230 carries the phosphoserine modification.

Belongs to the peptidase T1B family. In terms of assembly, the 26S proteasome consists of a 20S proteasome core and two 19S regulatory subunits. The 20S proteasome core is composed of 28 subunits that are arranged in four stacked rings, resulting in a barrel-shaped structure. The two end rings are each formed by seven alpha subunits, and the two central rings are each formed by seven beta subunits. The catalytic chamber with the active sites is on the inside of the barrel. Component of the immunoproteasome, where it displaces the equivalent housekeeping subunit PSMB7. Component of the spermatoproteasome, a form of the proteasome specifically found in testis. As to quaternary structure, (Microbial infection) Interacts with HIV-1 TAT protein. Autocleaved. The resulting N-terminal Thr residue of the mature subunit is responsible for the nucleophile proteolytic activity.

Its subcellular location is the cytoplasm. The protein localises to the nucleus. The enzyme catalyses Cleavage of peptide bonds with very broad specificity.. Functionally, the proteasome is a multicatalytic proteinase complex which is characterized by its ability to cleave peptides with Arg, Phe, Tyr, Leu, and Glu adjacent to the leaving group at neutral or slightly basic pH. The proteasome has an ATP-dependent proteolytic activity. This subunit is involved in antigen processing to generate class I binding peptides. The protein is Proteasome subunit beta type-10 (PSMB10) of Homo sapiens (Human).